A 449-amino-acid polypeptide reads, in one-letter code: Asparagine--tRNA ligase (449 aa).

This sequence belongs to the class-II aminoacyl-tRNA synthetase family. In terms of assembly, homodimer.

The protein localises to the cytoplasm. The catalysed reaction is tRNA(Asn) + L-asparagine + ATP = L-asparaginyl-tRNA(Asn) + AMP + diphosphate + H(+). In Mesomycoplasma hyopneumoniae (strain 232) (Mycoplasma hyopneumoniae), this protein is Asparagine--tRNA ligase.